Reading from the N-terminus, the 194-residue chain is MMMMKWIISILTMSIMPVLAYSSSIFRFHSEDVELCYGHLYFDRIYNVVNIKYNPHIPYRYNFINRTLTVDELDDNVFFTHGYFLKHKYGSLNPSLIVSLSGNLKYNDIQCSVNVSCLIKNLATSTSTILTSKHKTYSLHRSTCITIIGYDSIIWYKDINDKYNDIYDFTAICMLIASTLIVTIYVFKKIKMNS.

A signal peptide spans 1–22; it reads MMMMKWIISILTMSIMPVLAYS. Residues 23-165 lie on the Extracellular side of the membrane; the sequence is SSIFRFHSED…YKDINDKYND (143 aa). N-linked (GlcNAc...) asparagine; by host glycosylation is found at Asn65 and Asn114. Residues 166–186 traverse the membrane as a helical segment; the sequence is IYDFTAICMLIASTLIVTIYV. The Cytoplasmic portion of the chain corresponds to 187-194; it reads FKKIKMNS.

This sequence belongs to the orthopoxvirus OPG172 protein family.

It localises to the host membrane. The protein resides in the host cell surface. In Homo sapiens (Human), this protein is Protein A43 (OPG172).